A 483-amino-acid polypeptide reads, in one-letter code: Alginate biosynthesis protein AlgA (483 aa).

This sequence belongs to the mannose-6-phosphate isomerase type 2 family. Monomer. Co(2+) is required as a cofactor.

The catalysed reaction is D-mannose 6-phosphate = D-fructose 6-phosphate. It carries out the reaction alpha-D-mannose 1-phosphate + GTP + H(+) = GDP-alpha-D-mannose + diphosphate. Its pathway is nucleotide-sugar biosynthesis; GDP-alpha-D-mannose biosynthesis; GDP-alpha-D-mannose from alpha-D-mannose 1-phosphate (GTP route): step 1/1. It participates in nucleotide-sugar biosynthesis; GDP-alpha-D-mannose biosynthesis; alpha-D-mannose 1-phosphate from D-fructose 6-phosphate: step 1/2. In terms of biological role, produces a precursor for alginate polymerization. The alginate layer provides a protective barrier against host immune defenses and antibiotics. The chain is Alginate biosynthesis protein AlgA (algA) from Pseudomonas fluorescens.